The following is a 375-amino-acid chain: Chaperone protein DnaJ (375 aa).

In terms of domain architecture, J spans 5-70; it reads DYYEVLGVNR…RKRASYDQFG (66 aa). The segment at 133–211 adopts a CR-type zinc-finger fold; sequence GLSRTIKVPT…CHGQGRQQQT (79 aa). Zn(2+) contacts are provided by cysteine 146, cysteine 149, cysteine 163, cysteine 166, cysteine 185, cysteine 188, cysteine 199, and cysteine 202. CXXCXGXG motif repeat units lie at residues 146–153, 163–170, 185–192, and 199–206; these read CKTCNGSG, CPRCNGSG, CSVCRGRG, and CTDCHGQG.

The protein belongs to the DnaJ family. Homodimer. It depends on Zn(2+) as a cofactor.

It is found in the cytoplasm. Functionally, participates actively in the response to hyperosmotic and heat shock by preventing the aggregation of stress-denatured proteins and by disaggregating proteins, also in an autonomous, DnaK-independent fashion. Unfolded proteins bind initially to DnaJ; upon interaction with the DnaJ-bound protein, DnaK hydrolyzes its bound ATP, resulting in the formation of a stable complex. GrpE releases ADP from DnaK; ATP binding to DnaK triggers the release of the substrate protein, thus completing the reaction cycle. Several rounds of ATP-dependent interactions between DnaJ, DnaK and GrpE are required for fully efficient folding. Also involved, together with DnaK and GrpE, in the DNA replication of plasmids through activation of initiation proteins. The polypeptide is Chaperone protein DnaJ (Coxiella burnetii (strain CbuK_Q154) (Coxiella burnetii (strain Q154))).